The sequence spans 693 residues: Bacterial dynamin-like protein (693 aa).

At 1-521 (MVNQVATDRF…DNSPGWAKWA (521 aa)) the chain is on the cytoplasmic side. In terms of domain architecture, Dynamin-type G spans 66-313 (QQGVFRLLVL…QADLDGTGFP (248 aa)). The tract at residues 76-83 (GDMKRGKS) is G1 motif. Residue 79–84 (KRGKST) participates in GTP binding. The segment at 102–103 (CT) is G2 motif. Residues 180 to 183 (DSPG) are G3 motif. 235 to 241 (FLVNAWD) is a binding site for GTP. The G4 motif stretch occupies residues 238–241 (NAWD). Asn-268 is a region of interest (G5 motif). Position 292–293 (292–293 (SI)) interacts with GTP. A middle domain region spans residues 311-571 (GFPKFMDSLN…TAVTGILLGP (261 aa)). Residues 347–378 (REAVARRIPLLEQDVNELKKRIDSVEPEFNKL) are a coiled coil. The stretch at 522-574 (MGLLSLSKGNLAGFALAGAGFDWKNILLNYFTVIGIGGIITAVTGILLGPIGF) is an intramembrane region. Positions 572–606 (IGFALLGLGVGFLQADQARRELVKTAKKELVKHLP) are paddle domain. At 575–693 (ALLGLGVGFL…AYSNLLAYYS (119 aa)) the chain is on the cytoplasmic side. The tract at residues 607–693 (QVAHEQSQVV…AYSNLLAYYS (87 aa)) is GED. The stretch at 661–688 (ESEFNRLKNLQEDVIAQLQKIEAAYSNL) forms a coiled coil.

This sequence belongs to the TRAFAC class dynamin-like GTPase superfamily. Dynamin/Fzo/YdjA family. Mitofusin subfamily. In terms of assembly, homodimer. Self-assembles in the presence of GMP-PNP and liposomes, and probably also in the presence of GTP.

It is found in the cell inner membrane. The enzyme catalyses GTP + H2O = GDP + phosphate + H(+). Functionally, dynamin-related GTPase probably involved in membrane remodeling. Lipid and nucleotide-binding are thought to induce a large intramolecular rearrangement, leading to assembly on lipid bilayers and possible membrane curving. In the presence of the non-hydrolyzable GTP analog GMP-PNP self-assembles on a lipid bilayer; this does not stimulate subsequent GTPase activity. Does not bind lipids in the presence of GDP; perhaps GTP hydrolysis disrupts membrane-binding. The polypeptide is Bacterial dynamin-like protein (Nostoc punctiforme (strain ATCC 29133 / PCC 73102)).